The primary structure comprises 354 residues: Divinyl chlorophyll a/b light-harvesting protein PcbF (354 aa).

A run of 6 helical transmembrane segments spans residues phenylalanine 27–leucine 47, valine 88–leucine 108, phenylalanine 140–alanine 160, valine 201–isoleucine 221, alanine 248–cysteine 268, and threonine 315–leucine 335.

This sequence belongs to the PsbB/PsbC family. IsiA/Pcb subfamily. In terms of assembly, the antenna complex consists of divinyl chlorophylls (a and b) and divinyl chlorophyll a/b binding proteins and binds more divinyl chlorophyll b than does the antenna complex from high-light-adapted Prochlorococcus. Divinyl chlorophyll a is required as a cofactor. The cofactor is divinyl chlorophyll b.

The protein resides in the cellular thylakoid membrane. The antenna complex functions as a light receptor, it captures and delivers excitation energy to photosystems II and I. The Prochlorales pcb genes are not related to higher plant LHCs. The sequence is that of Divinyl chlorophyll a/b light-harvesting protein PcbF (pcbF) from Prochlorococcus marinus (strain SARG / CCMP1375 / SS120).